The sequence spans 262 residues: MRYQNMFETLKKHKKMAFIPFVTLGDPNYELSFEIVKTLIISGVSALELGLAFSDPVADGTTIQASHLRALKHASMAKNFQLLKKIRGYNHDIPIGLLAYANLIFSYGVDGFYAQAKECGVDSVLIADMPLIEKELVIKSAQKHQIKQIFIASPNASSKDLEQVATHSQGYIYTLARSGVTGASHTLENDASAIIKTLKTFSSTPALLGFGISKKEHITNAKGMGADGVICGSALVKIIEENLNNEDAMLEKIKGFVGGMIS.

Residues glutamate 48 and aspartate 59 each act as proton acceptor in the active site.

Belongs to the TrpA family. As to quaternary structure, tetramer of two alpha and two beta chains.

It catalyses the reaction (1S,2R)-1-C-(indol-3-yl)glycerol 3-phosphate + L-serine = D-glyceraldehyde 3-phosphate + L-tryptophan + H2O. It participates in amino-acid biosynthesis; L-tryptophan biosynthesis; L-tryptophan from chorismate: step 5/5. Its function is as follows. The alpha subunit is responsible for the aldol cleavage of indoleglycerol phosphate to indole and glyceraldehyde 3-phosphate. The chain is Tryptophan synthase alpha chain from Helicobacter pylori (strain J99 / ATCC 700824) (Campylobacter pylori J99).